Here is a 194-residue protein sequence, read N- to C-terminus: uncharacterized protein (194 aa).

The protein belongs to the mimivirus L114/R131 family.

This is an uncharacterized protein from Acanthamoeba polyphaga mimivirus (APMV).